The following is a 409-amino-acid chain: Forkhead box protein A2 (409 aa).

The fork-head DNA-binding region spans 150 to 241; sequence AKPPYSYISL…GNMFENGCYL (92 aa). Positions 250–262 are enriched in basic and acidic residues; sequence DKKLSKDPSRKTS. The segment at 250-315 is disordered; sequence DKKLSKDPSR…AASPTSQAQH (66 aa). Residues 263 to 286 show a composition bias toward low complexity; sequence EGGSNSSSESCNGNESPHSNSSSN.

Its subcellular location is the nucleus. May play a crucial role in specification of both the axial mesendoderm and the ventral nervous system. The chain is Forkhead box protein A2 (foxa2) from Danio rerio (Zebrafish).